Here is a 323-residue protein sequence, read N- to C-terminus: Protoheme IX farnesyltransferase (323 aa).

Transmembrane regions (helical) follow at residues I28–V48, L50–M70, F101–L121, L122–L142, I150–G170, I178–I198, F235–L255, and F282–T302.

The protein belongs to the UbiA prenyltransferase family. Protoheme IX farnesyltransferase subfamily.

The protein resides in the cell inner membrane. It catalyses the reaction heme b + (2E,6E)-farnesyl diphosphate + H2O = Fe(II)-heme o + diphosphate. Its pathway is porphyrin-containing compound metabolism; heme O biosynthesis; heme O from protoheme: step 1/1. In terms of biological role, converts heme B (protoheme IX) to heme O by substitution of the vinyl group on carbon 2 of heme B porphyrin ring with a hydroxyethyl farnesyl side group. In Rippkaea orientalis (strain PCC 8801 / RF-1) (Cyanothece sp. (strain PCC 8801)), this protein is Protoheme IX farnesyltransferase.